Reading from the N-terminus, the 303-residue chain is tRNA-cytidine(32) 2-sulfurtransferase (303 aa).

A PP-loop motif motif is present at residues 49–54; sequence SGGKDS. 3 residues coordinate [4Fe-4S] cluster: cysteine 124, cysteine 127, and cysteine 215.

Belongs to the TtcA family. Homodimer. Mg(2+) serves as cofactor. The cofactor is [4Fe-4S] cluster.

It is found in the cytoplasm. It catalyses the reaction cytidine(32) in tRNA + S-sulfanyl-L-cysteinyl-[cysteine desulfurase] + AH2 + ATP = 2-thiocytidine(32) in tRNA + L-cysteinyl-[cysteine desulfurase] + A + AMP + diphosphate + H(+). It functions in the pathway tRNA modification. Functionally, catalyzes the ATP-dependent 2-thiolation of cytidine in position 32 of tRNA, to form 2-thiocytidine (s(2)C32). The sulfur atoms are provided by the cysteine/cysteine desulfurase (IscS) system. The sequence is that of tRNA-cytidine(32) 2-sulfurtransferase from Anaeromyxobacter sp. (strain Fw109-5).